The chain runs to 237 residues: Phosphoribosylaminoimidazole-succinocarboxamide synthase (237 aa).

This sequence belongs to the SAICAR synthetase family.

The catalysed reaction is 5-amino-1-(5-phospho-D-ribosyl)imidazole-4-carboxylate + L-aspartate + ATP = (2S)-2-[5-amino-1-(5-phospho-beta-D-ribosyl)imidazole-4-carboxamido]succinate + ADP + phosphate + 2 H(+). Its pathway is purine metabolism; IMP biosynthesis via de novo pathway; 5-amino-1-(5-phospho-D-ribosyl)imidazole-4-carboxamide from 5-amino-1-(5-phospho-D-ribosyl)imidazole-4-carboxylate: step 1/2. In Psychrobacter cryohalolentis (strain ATCC BAA-1226 / DSM 17306 / VKM B-2378 / K5), this protein is Phosphoribosylaminoimidazole-succinocarboxamide synthase.